A 301-amino-acid polypeptide reads, in one-letter code: Glycine--tRNA ligase alpha subunit (301 aa).

This sequence belongs to the class-II aminoacyl-tRNA synthetase family. Tetramer of two alpha and two beta subunits.

It localises to the cytoplasm. It carries out the reaction tRNA(Gly) + glycine + ATP = glycyl-tRNA(Gly) + AMP + diphosphate. The sequence is that of Glycine--tRNA ligase alpha subunit from Neisseria meningitidis serogroup C (strain 053442).